We begin with the raw amino-acid sequence, 479 residues long: Ribosomal RNA small subunit methyltransferase F (479 aa).

S-adenosyl-L-methionine-binding positions include 125–131 (AAAPGSK), Glu-149, Asp-176, and Asp-194. Cys-247 acts as the Nucleophile in catalysis.

This sequence belongs to the class I-like SAM-binding methyltransferase superfamily. RsmB/NOP family.

The protein resides in the cytoplasm. The catalysed reaction is cytidine(1407) in 16S rRNA + S-adenosyl-L-methionine = 5-methylcytidine(1407) in 16S rRNA + S-adenosyl-L-homocysteine + H(+). Functionally, specifically methylates the cytosine at position 1407 (m5C1407) of 16S rRNA. The protein is Ribosomal RNA small subunit methyltransferase F of Escherichia coli (strain ATCC 8739 / DSM 1576 / NBRC 3972 / NCIMB 8545 / WDCM 00012 / Crooks).